A 347-amino-acid chain; its full sequence is uncharacterized protein (347 aa).

The first 26 residues, 1-26, serve as a signal peptide directing secretion; it reads MQGRVAGSCAPLGLLLVCLHLPGLFA. Residues 41–60 show a composition bias toward polar residues; it reads GTNLPQLGQPSSTGPSNSEH. 2 disordered regions span residues 41–110 and 148–189; these read GTNL…MDSW and SGPL…AGGK. The span at 148-157 shows a compositional bias: low complexity; sequence SGPLPGESSP.

In terms of assembly, binds to numerous extracellular matrix proteins.

It is found in the secreted. Its subcellular location is the extracellular space. The protein resides in the extracellular matrix. This is an uncharacterized protein from Pan troglodytes (Chimpanzee).